Reading from the N-terminus, the 339-residue chain is Undecaprenyl-phosphate 4-deoxy-4-formamido-L-arabinose transferase (339 aa).

2 consecutive transmembrane segments (helical) span residues 235 to 255 (LSLVGGGMALAGFLFALFLLV) and 269 to 289 (LFVLFAVLFMFSGVQLLGMGL).

Belongs to the glycosyltransferase 2 family.

Its subcellular location is the cell inner membrane. It carries out the reaction UDP-4-deoxy-4-formamido-beta-L-arabinose + di-trans,octa-cis-undecaprenyl phosphate = 4-deoxy-4-formamido-alpha-L-arabinopyranosyl di-trans,octa-cis-undecaprenyl phosphate + UDP. It participates in glycolipid biosynthesis; 4-amino-4-deoxy-alpha-L-arabinose undecaprenyl phosphate biosynthesis; 4-amino-4-deoxy-alpha-L-arabinose undecaprenyl phosphate from UDP-4-deoxy-4-formamido-beta-L-arabinose and undecaprenyl phosphate: step 1/2. The protein operates within bacterial outer membrane biogenesis; lipopolysaccharide biosynthesis. Functionally, catalyzes the transfer of 4-deoxy-4-formamido-L-arabinose from UDP to undecaprenyl phosphate. The modified arabinose is attached to lipid A and is required for resistance to polymyxin and cationic antimicrobial peptides. This chain is Undecaprenyl-phosphate 4-deoxy-4-formamido-L-arabinose transferase, found in Pseudomonas paraeruginosa (strain DSM 24068 / PA7) (Pseudomonas aeruginosa (strain PA7)).